Here is a 27-residue protein sequence, read N- to C-terminus: iraD leader peptide (27 aa).

Functionally, a short protein whose stop codon overlaps with the start codon of downstream iraD; its mRNA secondary structure is predicted to fold and sequester the Shine-Dalgarno sequence of iraD. When this protein is expressed the downstream iraD is also expressed due to ribosomal coupling. This Escherichia coli (strain K12) protein is iraD leader peptide (idlP).